The chain runs to 355 residues: Butyrate kinase 1 (355 aa).

The protein belongs to the acetokinase family.

Its subcellular location is the cytoplasm. The catalysed reaction is butanoate + ATP = butanoyl phosphate + ADP. It participates in lipid metabolism; butanoate metabolism. In terms of biological role, catalyzes the conversion of butyryl-CoA through butyryl phosphate to butyrate. The protein is Butyrate kinase 1 (buk1) of Clostridium acetobutylicum (strain ATCC 824 / DSM 792 / JCM 1419 / IAM 19013 / LMG 5710 / NBRC 13948 / NRRL B-527 / VKM B-1787 / 2291 / W).